Consider the following 129-residue polypeptide: Glycine cleavage system H protein (129 aa).

The 83-residue stretch at 24 to 106 folds into the Lipoyl-binding domain; the sequence is SYTVGISEHA…FGDGWFFRVM (83 aa). At Lys-65 the chain carries N6-lipoyllysine.

The protein belongs to the GcvH family. In terms of assembly, the glycine cleavage system is composed of four proteins: P, T, L and H. (R)-lipoate is required as a cofactor.

In terms of biological role, the glycine cleavage system catalyzes the degradation of glycine. The H protein shuttles the methylamine group of glycine from the P protein to the T protein. This chain is Glycine cleavage system H protein, found in Shewanella halifaxensis (strain HAW-EB4).